Here is a 271-residue protein sequence, read N- to C-terminus: Ribosomal RNA small subunit methyltransferase J (271 aa).

Residues 116 to 117 (RD), 132 to 133 (ER), 168 to 169 (SS), and aspartate 190 contribute to the S-adenosyl-L-methionine site.

The protein belongs to the methyltransferase superfamily. RsmJ family.

The protein resides in the cytoplasm. It catalyses the reaction guanosine(1516) in 16S rRNA + S-adenosyl-L-methionine = N(2)-methylguanosine(1516) in 16S rRNA + S-adenosyl-L-homocysteine + H(+). Its function is as follows. Specifically methylates the guanosine in position 1516 of 16S rRNA. This chain is Ribosomal RNA small subunit methyltransferase J, found in Shewanella piezotolerans (strain WP3 / JCM 13877).